We begin with the raw amino-acid sequence, 103 residues long: MAAKIRQNDEVIVLTGKDKGKRGKVTQVLPNGKVIVEGVKIITKHEKPVPALGKEGGLVKKEAAIDVSNVAIFNPKTNKADRVGFRFEDGKKVRFFKSNNEII.

Belongs to the universal ribosomal protein uL24 family. Part of the 50S ribosomal subunit.

Its function is as follows. One of two assembly initiator proteins, it binds directly to the 5'-end of the 23S rRNA, where it nucleates assembly of the 50S subunit. In terms of biological role, one of the proteins that surrounds the polypeptide exit tunnel on the outside of the subunit. This chain is Large ribosomal subunit protein uL24, found in Mannheimia succiniciproducens (strain KCTC 0769BP / MBEL55E).